A 391-amino-acid polypeptide reads, in one-letter code: Histamine H4 receptor (391 aa).

Residues 1-19 (MSESNGTDVLPLTAQVPLA) are Extracellular-facing. N5 is a glycosylation site (N-linked (GlcNAc...) asparagine). The helical transmembrane segment at 20–40 (FLMSLLAFAITIGNAVVILAF) threads the bilayer. Residues 41–52 (VADRNLRHRSNY) are Cytoplasmic-facing. Residues 53–73 (FFLNLAISDFFVGVISIPLYI) form a helical membrane-spanning segment. At 74-87 (PHTLFNWNFGSGIC) the chain is on the extracellular side. A disulfide bridge connects residues C87 and C166. The chain crosses the membrane as a helical span at residues 88-108 (MFWLITDYLLCTASVYSIVLI). The Cytoplasmic segment spans residues 109–131 (SYDRYQSVSNAVRYRAQHTGILK). Residues 132–152 (IVAQMVAVWILAFLVNGPMIL) form a helical membrane-spanning segment. The Extracellular portion of the chain corresponds to 153–174 (ASDSWKNSTNTEECEPGFVTEW). N159 is a glycosylation site (N-linked (GlcNAc...) asparagine). Residues 175–195 (YILAITAFLEFLLPVSLVVYF) form a helical membrane-spanning segment. The Cytoplasmic portion of the chain corresponds to 196–306 (SVQIYWSLWK…LLRGRKLARS (111 aa)). Residues 307 to 327 (LAVLLSAFAICWAPYCLFTIV) form a helical membrane-spanning segment. Residues 328 to 343 (LSTYRRGERPKSIWYS) are Extracellular-facing. The helical transmembrane segment at 344–364 (IAFWLQWFNSLINPFLYPLCH) threads the bilayer. Residues 365 to 391 (RRFQKAFWKILCVTKQPAPSQTQSVSS) are Cytoplasmic-facing.

The protein belongs to the G-protein coupled receptor 1 family. As to quaternary structure, interacts with TSPAN4.

The protein localises to the cell membrane. In terms of biological role, the H4 subclass of histamine receptors could mediate the histamine signals in peripheral tissues. Displays a significant level of constitutive activity (spontaneous activity in the absence of agonist). The polypeptide is Histamine H4 receptor (Hrh4) (Rattus norvegicus (Rat)).